The primary structure comprises 474 residues: Probable fucosyltransferase 9 (474 aa).

A helical; Signal-anchor for type II membrane protein membrane pass occupies residues 1-21; it reads MIKLTIAIATCLVLCLVLLLP. Residues 22-474 are Lumenal-facing; it reads SSNISYRHKY…LKLVDVSDEL (453 aa). 3 N-linked (GlcNAc...) asparagine glycosylation sites follow: Asn-24, Asn-39, and Asn-208.

It belongs to the glycosyltransferase 37 family. In terms of tissue distribution, expressed in leaves and stems.

Its subcellular location is the golgi apparatus. The protein localises to the golgi stack membrane. It functions in the pathway protein modification; protein glycosylation. In terms of biological role, may be involved in cell wall biosynthesis. May act as a fucosyltransferase. The sequence is that of Probable fucosyltransferase 9 (FUT9) from Arabidopsis thaliana (Mouse-ear cress).